The following is a 116-amino-acid chain: Vesicle-associated membrane protein 5 (116 aa).

The Cytoplasmic portion of the chain corresponds to 1-72; sequence MAGIELERCQ…CWENIRYRIC (72 aa). One can recognise a v-SNARE coiled-coil homology domain in the interval 5–65; sequence ELERCQQQAN…QNLAQKKCWE (61 aa). A phosphoserine mark is found at S41, S48, and S49. The helical; Anchor for type IV membrane protein transmembrane segment at 73–93 threads the bilayer; sequence VGLVVVGVLLIILIVLLVVFL. Residues 94 to 116 are Vesicular-facing; sequence PQSSDSSSAPRTQDAGIASGPGN. The interval 96–116 is disordered; sequence SSDSSSAPRTQDAGIASGPGN.

This sequence belongs to the synaptobrevin family. Post-translationally, (Microbial infection) Targeted and hydrolyzed by C.botulinum neurotoxin type X (BoNT/X) which hydrolyzes the 40-Arg-|-Ser-41 bond and probably inhibits neurotransmitter release. It remains unknown whether BoNT/X is ever produced, or what organisms it targets.

The protein localises to the cell membrane. It is found in the endomembrane system. Its subcellular location is the golgi apparatus. It localises to the trans-Golgi network membrane. In terms of biological role, may participate in trafficking events that are associated with myogenesis, such as myoblast fusion and/or GLUT4 trafficking. In Homo sapiens (Human), this protein is Vesicle-associated membrane protein 5 (VAMP5).